A 447-amino-acid chain; its full sequence is Phosphoglucosamine mutase (447 aa).

Serine 102 acts as the Phosphoserine intermediate in catalysis. Mg(2+) is bound by residues serine 102, aspartate 241, aspartate 243, and aspartate 245. Serine 102 is modified (phosphoserine).

This sequence belongs to the phosphohexose mutase family. Mg(2+) serves as cofactor. Activated by phosphorylation.

It carries out the reaction alpha-D-glucosamine 1-phosphate = D-glucosamine 6-phosphate. Functionally, catalyzes the conversion of glucosamine-6-phosphate to glucosamine-1-phosphate. This is Phosphoglucosamine mutase from Hamiltonella defensa subsp. Acyrthosiphon pisum (strain 5AT).